Consider the following 319-residue polypeptide: MENFPIISLDKVNGVERAATMEMIKDACENWGFFELVNHGIPREVMDTVEKMTKGHYKKCMEQRFKELVASKALEGVQAEVTDMDWESTFFLKHLPISNISEVPDLDEEYREVMRDFAKRLEKLAEELLDLLCENLGLEKGYLKNAFYGSKGPNFGTKVSNYPPCPKPDLIKGLRAHTDAGGIILLFQDDKVSGLQLLKDGQWIDVPPMRHSIVVNLGDQLEVITNGKYKSVMHRVIAQKDGARMSLASFYNPGSDAVIYPAPALVEKEAEENKQVYPKFVFDDYMKLYAGLKFQAKEPRFEAMKAMETDVKMDPIATV.

One can recognise a Fe2OG dioxygenase domain in the interval 153–253; the sequence is PNFGTKVSNY…RMSLASFYNP (101 aa). 3 residues coordinate Fe cation: H177, D179, and H234.

Belongs to the iron/ascorbate-dependent oxidoreductase family. Requires Fe cation as cofactor.

The catalysed reaction is 1-aminocyclopropane-1-carboxylate + L-ascorbate + O2 = ethene + L-dehydroascorbate + hydrogen cyanide + CO2 + 2 H2O. The protein operates within alkene biosynthesis; ethylene biosynthesis via S-adenosyl-L-methionine; ethylene from S-adenosyl-L-methionine: step 2/2. The protein is 1-aminocyclopropane-1-carboxylate oxidase 1 (ACO1) of Petunia hybrida (Petunia).